We begin with the raw amino-acid sequence, 320 residues long: NAC domain-containing protein 20 (320 aa).

One can recognise an NAC domain in the interval 14 to 170; sequence LPPGFRFHPT…DWAVCRIFHK (157 aa). A DNA-binding region spans residues 114 to 176; it reads IGMKKTLVFY…IFHKSSGIKK (63 aa).

Forms homodimers. Forms heterodimers with NAC26. As to expression, expressed in developing seeds. Expressed in developing endosperm.

The protein resides in the nucleus. The protein localises to the endoplasmic reticulum. Its function is as follows. Transcription factor that acts redundantly with NAC26 to regulate the expression of genes involved in the biosynthesis of starch and storage proteins in grain. Directly binds to the promoters of starch synthase 1 (SS1), pullulanase (PUL), glutelin A1 (GLUA1), glutelins B4 and B5 (GLUB4 and GLUB5), alpha-globulin and 16 kDa prolamin, and activates their expression. This chain is NAC domain-containing protein 20, found in Oryza sativa subsp. japonica (Rice).